The sequence spans 362 residues: Aminomethyltransferase (362 aa).

It belongs to the GcvT family. As to quaternary structure, the glycine cleavage system is composed of four proteins: P, T, L and H.

It catalyses the reaction N(6)-[(R)-S(8)-aminomethyldihydrolipoyl]-L-lysyl-[protein] + (6S)-5,6,7,8-tetrahydrofolate = N(6)-[(R)-dihydrolipoyl]-L-lysyl-[protein] + (6R)-5,10-methylene-5,6,7,8-tetrahydrofolate + NH4(+). The glycine cleavage system catalyzes the degradation of glycine. This is Aminomethyltransferase from Porphyromonas gingivalis (strain ATCC 33277 / DSM 20709 / CIP 103683 / JCM 12257 / NCTC 11834 / 2561).